The chain runs to 157 residues: Ribosome maturation factor RimP (157 aa).

The protein belongs to the RimP family.

Its subcellular location is the cytoplasm. Its function is as follows. Required for maturation of 30S ribosomal subunits. In Lactococcus lactis subsp. lactis (strain IL1403) (Streptococcus lactis), this protein is Ribosome maturation factor RimP.